The chain runs to 298 residues: Cyanophycinase (298 aa).

Catalysis depends on charge relay system residues Ser-155, Glu-173, and His-197.

Belongs to the peptidase S51 family.

The catalysed reaction is [L-4-(L-arginin-2-N-yl)aspartate](n) + H2O = [L-4-(L-arginin-2-N-yl)aspartate](n-1) + L-4-(L-arginin-2-N-yl)aspartate. Exopeptidase that catalyzes the hydrolytic cleavage of multi-L-arginyl-poly-L-aspartic acid (cyanophycin; a water-insoluble reserve polymer) into aspartate-arginine dipeptides. The polypeptide is Cyanophycinase (cphB) (Nostoc sp. (strain PCC 7120 / SAG 25.82 / UTEX 2576)).